Reading from the N-terminus, the 620-residue chain is MENQIQPKAEVAKLELEAVIGFNGHVPTGLKCHPDQEHLIYPLGCTILIQAIKTQEQNFLHGHSNNVSCVTISKSGVYIASGQVTFMGFKADIILWDYKKRELMARLSLHKGKIEALAFSPNDLYLVSLGGPDDGSVVVWSIAKTEAICGSPAAGLNVGNATSVVFSQCHDEMFVTAGNGTIRVWELDLPNRKIWPTECQTGQMKRIVMSISMASDDSFFYLGTTTGDILKMNPRTKLLADTGPAKDKFSLGVSAIKCLKTGGLLVGSGAGLLVFCRSPSYKPIKKIQLQGGITSISLRGEGHQFFVGTEESHIYRVNFTDFKETLVTTCHFEAVEDVVFPFGTAELFATCAKKDIRVWHTLSNRELLRITVPNMTCHGIDFMRDGKSLISAWDDGKIRAFAPETGRLMYVISNAHRIGVTAVATTSDCTRVISGGGEGEVRVWQIGHQTQKLEEALKEHKSSVSCIRVKKNNEECVTASTDGTCIIWDLVRLRRNQMILANTLFQCVCYHPEEFQIITSGTDRKIAYWEVFDGSGIRELDGSLSGSINGMDITPEGVHFVTGGNDHLVKVWDYNEGEVTHVGVGHSGNITRVRISPGNEYIVSVSADGAILRWKYPFPS.

WD repeat units follow at residues 62–106 (GHSN…LMAR), 109–150 (LHKG…AICG), 156–195 (LNVGNATSVVFSQCHDEMFVTAGNGTIRVWELDLPNRKIW), 203–242 (QMKRIVMSISMASDDSFFYLGTTTGDILKMNPRTKLLADT), 288–327 (QLQGGITSISLRGEGHQFFVGTEESHIYRVNFTDFKETLV), 330–369 (CHFEAVEDVVFPFGTAELFATCAKKDIRVWHTLSNRELLR), 372–411 (VPNMTCHGIDFMRDGKSLISAWDDGKIRAFAPETGRLMYV), 415–454 (AHRIGVTAVATTSDCTRVISGGGEGEVRVWQIGHQTQKLE), 459–498 (EHKSSVSCIRVKKNNEECVTASTDGTCIIWDLVRLRRNQM), 500–539 (LANTLFQCVCYHPEEFQIITSGTDRKIAYWEVFDGSGIRE), 543–582 (SLSGSINGMDITPEGVHFVTGGNDHLVKVWDYNEGEVTHV), and 585–620 (GHSGNITRVRISPGNEYIVSVSADGAILRWKYPFPS).

It belongs to the CFAP52 family. As to quaternary structure, microtubule inner protein component of sperm flagellar doublet microtubules. Interacts with BRCA2. Interacts with the CCT chaperonin complex. Interacts with HSP70. Interacts with AK8. Interacts with CFAP45. Interacts with DNAI1. Interacts with IQDC. In terms of tissue distribution, expressed in respiratory cells and sperm (at protein level).

It is found in the cytoplasm. The protein resides in the cytoskeleton. Its subcellular location is the cilium axoneme. The protein localises to the flagellum axoneme. Functionally, microtubule inner protein (MIP) part of the dynein-decorated doublet microtubules (DMTs) in cilia axoneme. Important for proper ciliary and flagellar beating. May act in cooperation with CFAP45 and axonemal dynein subunit DNAH11. May play a role in cell growth and/or survival. This is Cilia- and flagella-associated protein 52 (CFAP52) from Sus scrofa (Pig).